The following is a 316-amino-acid chain: MDVLLANPRGFCAGVDRAIEIVKRAIETLGAPIYVRHEVVHNRFVVDDLKQRGAIFVEELDEVPDNNTVIFSAHGVSQAVRQEAERRGLKVFDATCPLVTKVHFEVARHCRAGRDVVLIGHAGHPEVEGTMGQWNREAGTGQIYLVEDVEQVATLQINQPENFAYTTQTTLSVDDTRGIIDALRERFPAMQGPKNDDICYATQNRQDAVRDLAKRCDLVLVVGSPNSSNSNRLSELARREGVESYLIDGAHEIDPAWVAGKQHIGVTAGASAPQVLVDGVLARLAELGATGVGELDGEPESMVFALPKELRLRLVD.

[4Fe-4S] cluster is bound at residue cysteine 12. (2E)-4-hydroxy-3-methylbut-2-enyl diphosphate is bound by residues histidine 41 and histidine 74. Dimethylallyl diphosphate-binding residues include histidine 41 and histidine 74. Isopentenyl diphosphate-binding residues include histidine 41 and histidine 74. Cysteine 96 serves as a coordination point for [4Fe-4S] cluster. A (2E)-4-hydroxy-3-methylbut-2-enyl diphosphate-binding site is contributed by histidine 124. Histidine 124 contributes to the dimethylallyl diphosphate binding site. Histidine 124 lines the isopentenyl diphosphate pocket. Glutamate 126 acts as the Proton donor in catalysis. Threonine 169 is a (2E)-4-hydroxy-3-methylbut-2-enyl diphosphate binding site. Cysteine 199 is a binding site for [4Fe-4S] cluster. 4 residues coordinate (2E)-4-hydroxy-3-methylbut-2-enyl diphosphate: serine 227, serine 228, asparagine 229, and serine 271. Dimethylallyl diphosphate contacts are provided by serine 227, serine 228, asparagine 229, and serine 271. Isopentenyl diphosphate-binding residues include serine 227, serine 228, asparagine 229, and serine 271.

It belongs to the IspH family. [4Fe-4S] cluster is required as a cofactor.

The catalysed reaction is isopentenyl diphosphate + 2 oxidized [2Fe-2S]-[ferredoxin] + H2O = (2E)-4-hydroxy-3-methylbut-2-enyl diphosphate + 2 reduced [2Fe-2S]-[ferredoxin] + 2 H(+). It carries out the reaction dimethylallyl diphosphate + 2 oxidized [2Fe-2S]-[ferredoxin] + H2O = (2E)-4-hydroxy-3-methylbut-2-enyl diphosphate + 2 reduced [2Fe-2S]-[ferredoxin] + 2 H(+). Its pathway is isoprenoid biosynthesis; dimethylallyl diphosphate biosynthesis; dimethylallyl diphosphate from (2E)-4-hydroxy-3-methylbutenyl diphosphate: step 1/1. The protein operates within isoprenoid biosynthesis; isopentenyl diphosphate biosynthesis via DXP pathway; isopentenyl diphosphate from 1-deoxy-D-xylulose 5-phosphate: step 6/6. Its function is as follows. Catalyzes the conversion of 1-hydroxy-2-methyl-2-(E)-butenyl 4-diphosphate (HMBPP) into a mixture of isopentenyl diphosphate (IPP) and dimethylallyl diphosphate (DMAPP). Acts in the terminal step of the DOXP/MEP pathway for isoprenoid precursor biosynthesis. In Stenotrophomonas maltophilia (strain K279a), this protein is 4-hydroxy-3-methylbut-2-enyl diphosphate reductase.